Consider the following 461-residue polypeptide: Dihydrolipoyl dehydrogenase (461 aa).

FAD is bound by residues 34 to 42 (EEDQAGGTC), lysine 51, and glycine 114. Cysteines 42 and 47 form a disulfide. NAD(+) is bound by residues 177 to 181 (GGGVI), glutamate 200, and 261 to 264 (AIGR). Aspartate 304 and alanine 312 together coordinate FAD. Histidine 436 functions as the Proton acceptor in the catalytic mechanism.

It belongs to the class-I pyridine nucleotide-disulfide oxidoreductase family. The cofactor is FAD.

It is found in the cytoplasm. It carries out the reaction N(6)-[(R)-dihydrolipoyl]-L-lysyl-[protein] + NAD(+) = N(6)-[(R)-lipoyl]-L-lysyl-[protein] + NADH + H(+). Functionally, the branched-chain alpha-keto dehydrogenase complex catalyzes the overall conversion of alpha-keto acids to acyl-CoA and CO(2). It contains multiple copies of 3 enzymatic components: branched-chain alpha-keto acid decarboxylase (E1), lipoamide acyltransferase (E2) and lipoamide dehydrogenase (E3). The protein is Dihydrolipoyl dehydrogenase (lpdA) of Chlamydia pneumoniae (Chlamydophila pneumoniae).